The chain runs to 198 residues: Peptidyl-tRNA hydrolase (198 aa).

A tRNA-binding site is contributed by Tyr15. The active-site Proton acceptor is the His20. Residues Phe66, Asn68, and Asn114 each coordinate tRNA.

This sequence belongs to the PTH family. As to quaternary structure, monomer.

The protein localises to the cytoplasm. It catalyses the reaction an N-acyl-L-alpha-aminoacyl-tRNA + H2O = an N-acyl-L-amino acid + a tRNA + H(+). Its function is as follows. Hydrolyzes ribosome-free peptidyl-tRNAs (with 1 or more amino acids incorporated), which drop off the ribosome during protein synthesis, or as a result of ribosome stalling. Catalyzes the release of premature peptidyl moieties from peptidyl-tRNA molecules trapped in stalled 50S ribosomal subunits, and thus maintains levels of free tRNAs and 50S ribosomes. The sequence is that of Peptidyl-tRNA hydrolase from Cupriavidus metallidurans (strain ATCC 43123 / DSM 2839 / NBRC 102507 / CH34) (Ralstonia metallidurans).